A 534-amino-acid polypeptide reads, in one-letter code: Blue-light-activated protein (534 aa).

One can recognise a PAS domain in the interval 20-93 (GKDIFFAAVE…QSIRDAIDQR (74 aa)). An S-4a-FMN cysteine modification is found at cysteine 70. Positions 94-148 (VDISTEILNYRKDGSSFWNALFISPVYNDAGELIYFFASQLDISRRRDAEEALRQ) constitute a PAC domain. The Histidine kinase domain occupies 161-390 (GIAHDFNNLL…TLRLYFPVDE (230 aa)). Histidine 164 is subject to Phosphohistidine; by autocatalysis. A Response regulatory domain is found at 411 to 527 (RILIVEDRPD…DLARKVRQVL (117 aa)). Aspartate 461 is subject to 4-aspartylphosphate.

FMN binds covalently to cysteine after exposure to blue light and this bond is spontaneously broken in the dark.

The enzyme catalyses ATP + protein L-histidine = ADP + protein N-phospho-L-histidine.. Its function is as follows. Photosensitive kinase and response regulator that is involved in increased bacterial virulence upon exposure to light. The sequence is that of Blue-light-activated protein from Pseudomonas syringae pv. syringae (strain B728a).